Consider the following 448-residue polypeptide: Asparagine--tRNA ligase (448 aa).

The protein belongs to the class-II aminoacyl-tRNA synthetase family. As to quaternary structure, homodimer.

It is found in the cytoplasm. It catalyses the reaction tRNA(Asn) + L-asparagine + ATP = L-asparaginyl-tRNA(Asn) + AMP + diphosphate + H(+). This chain is Asparagine--tRNA ligase, found in Streptococcus agalactiae serotype Ia (strain ATCC 27591 / A909 / CDC SS700).